A 411-amino-acid polypeptide reads, in one-letter code: uncharacterized protein (411 aa).

This sequence belongs to the peptidase M20 family.

This is an uncharacterized protein from Haemophilus influenzae (strain ATCC 51907 / DSM 11121 / KW20 / Rd).